Consider the following 677-residue polypeptide: MSEVLRRANNALSSVKQYQSLLNHFAATQSISKTKALHCHVITGGRVSGHILSTLSVTYALCGHITYARKLFEEMPQSSLLSYNIVIRMYVREGLYHDAISVFIRMVSEGVKCVPDGYTYPFVAKAAGELKSMKLGLVVHGRILRSWFGRDKYVQNALLAMYMNFGKVEMARDVFDVMKNRDVISWNTMISGYYRNGYMNDALMMFDWMVNESVDLDHATIVSMLPVCGHLKDLEMGRNVHKLVEEKRLGDKIEVKNALVNMYLKCGRMDEARFVFDRMERRDVITWTCMINGYTEDGDVENALELCRLMQFEGVRPNAVTIASLVSVCGDALKVNDGKCLHGWAVRQQVYSDIIIETSLISMYAKCKRVDLCFRVFSGASKYHTGPWSAIIAGCVQNELVSDALGLFKRMRREDVEPNIATLNSLLPAYAALADLRQAMNIHCYLTKTGFMSSLDAATGLVHVYSKCGTLESAHKIFNGIQEKHKSKDVVLWGALISGYGMHGDGHNALQVFMEMVRSGVTPNEITFTSALNACSHSGLVEEGLTLFRFMLEHYKTLARSNHYTCIVDLLGRAGRLDEAYNLITTIPFEPTSTVWGALLAACVTHENVQLGEMAANKLFELEPENTGNYVLLANIYAALGRWKDMEKVRSMMENVGLRKKPGHSTIEIRSNSVDTR.

PPR repeat units follow at residues Ser48 to Ser78, Ser79 to Cys113, Asp116 to Ser146, Asp151 to Arg181, Asp182 to Leu216, Asp217 to Asp251, Lys252 to Arg282, Asp283 to Pro317, Asn318 to Ser352, Asp353 to Tyr383, His384 to Pro418, Asn419 to Ser453, Ser454 to Lys488, Asp489 to Pro523, Asn524 to His554, and Arg560 to Glu590. The segment at Val595–Arg670 is type E motif.

This sequence belongs to the PPR family. PCMP-E subfamily.

The chain is Pentatricopeptide repeat-containing protein At5g39350 (PCMP-E16) from Arabidopsis thaliana (Mouse-ear cress).